Here is a 117-residue protein sequence, read N- to C-terminus: LLAALRGQSLGLAAMSSGTHRLTPEERNQAILDLKAAGWSELSERDAIYKEFSFRNFNQAFGFMSRVALQAEKMNHHPEWFNVYNKVQITLTSHDCGELTKKDVKLAQFIEKAAASV.

N6-acetyllysine; alternate is present on residues Lys101, Lys105, and Lys112. Residues Lys101, Lys105, and Lys112 each carry the N6-succinyllysine; alternate modification.

It belongs to the pterin-4-alpha-carbinolamine dehydratase family. In terms of assembly, homotetramer. Interacts with DYRK1B.

The catalysed reaction is (4aS,6R)-4a-hydroxy-L-erythro-5,6,7,8-tetrahydrobiopterin = (6R)-L-erythro-6,7-dihydrobiopterin + H2O. Involved in tetrahydrobiopterin biosynthesis. Seems to both prevent the formation of 7-pterins and accelerate the formation of quinonoid-BH2. In terms of biological role, regulates the dimerization of homeodomain protein HNF-1-alpha and enhances its transcriptional activity. The polypeptide is Pterin-4-alpha-carbinolamine dehydratase 2 (PCBD2) (Pongo abelii (Sumatran orangutan)).